We begin with the raw amino-acid sequence, 584 residues long: ATP-dependent lipid A-core flippase (584 aa).

Transmembrane regions (helical) follow at residues 18–38 (LWPIIFPFRVGLVVASITLIL), 65–85 (VFVWMPLALVGLMGIRGFSGF), 155–175 (IIGLCIMMFYYSWQLSLILVL), 252–272 (IFDPLIQCVASLALAFVLYAA), and 277–297 (VMEMLTAGTITVIFSSMIVLM). Residues 30–312 (VVASITLILN…LTNVSAQFQR (283 aa)) enclose the ABC transmembrane type-1 domain. An ABC transporter domain is found at 344–580 (IIFDDVTFFY…QGIYAQLYKL (237 aa)). 378-385 (GRSGSGKS) lines the ATP pocket.

This sequence belongs to the ABC transporter superfamily. Lipid exporter (TC 3.A.1.106) family. Homodimer.

Its subcellular location is the cell inner membrane. The catalysed reaction is ATP + H2O + lipid A-core oligosaccharideSide 1 = ADP + phosphate + lipid A-core oligosaccharideSide 2.. In terms of biological role, involved in lipopolysaccharide (LPS) biosynthesis. Translocates lipid A-core from the inner to the outer leaflet of the inner membrane. Transmembrane domains (TMD) form a pore in the inner membrane and the ATP-binding domain (NBD) is responsible for energy generation. The sequence is that of ATP-dependent lipid A-core flippase from Blochmanniella pennsylvanica (strain BPEN).